A 156-amino-acid polypeptide reads, in one-letter code: Small ribosomal subunit protein uS7 (156 aa).

It belongs to the universal ribosomal protein uS7 family. In terms of assembly, part of the 30S ribosomal subunit. Contacts proteins S9 and S11.

Functionally, one of the primary rRNA binding proteins, it binds directly to 16S rRNA where it nucleates assembly of the head domain of the 30S subunit. Is located at the subunit interface close to the decoding center, probably blocks exit of the E-site tRNA. The polypeptide is Small ribosomal subunit protein uS7 (Nitrosomonas europaea (strain ATCC 19718 / CIP 103999 / KCTC 2705 / NBRC 14298)).